The chain runs to 308 residues: Pseudouridine-5'-phosphate glycosidase (308 aa).

The active-site Proton donor is the glutamate 25. Substrate-binding residues include lysine 86 and valine 106. Position 142 (aspartate 142) interacts with Mn(2+). 144 to 146 (SAD) contacts substrate. Lysine 163 functions as the Nucleophile in the catalytic mechanism.

The protein belongs to the pseudouridine-5'-phosphate glycosidase family. Homotrimer. Mn(2+) serves as cofactor.

It carries out the reaction D-ribose 5-phosphate + uracil = psi-UMP + H2O. Catalyzes the reversible cleavage of pseudouridine 5'-phosphate (PsiMP) to ribose 5-phosphate and uracil. Functions biologically in the cleavage direction, as part of a pseudouridine degradation pathway. This chain is Pseudouridine-5'-phosphate glycosidase, found in Symbiobacterium thermophilum (strain DSM 24528 / JCM 14929 / IAM 14863 / T).